We begin with the raw amino-acid sequence, 635 residues long: 1-deoxy-D-xylulose-5-phosphate synthase (635 aa).

Thiamine diphosphate contacts are provided by residues His-79 and 120–122 (GHS). Mg(2+) is bound at residue Asp-151. Thiamine diphosphate is bound by residues 152-153 (GA), Asn-182, Tyr-291, and Glu-372. Asn-182 provides a ligand contact to Mg(2+).

This sequence belongs to the transketolase family. DXPS subfamily. In terms of assembly, homodimer. The cofactor is Mg(2+). It depends on thiamine diphosphate as a cofactor.

The catalysed reaction is D-glyceraldehyde 3-phosphate + pyruvate + H(+) = 1-deoxy-D-xylulose 5-phosphate + CO2. It functions in the pathway metabolic intermediate biosynthesis; 1-deoxy-D-xylulose 5-phosphate biosynthesis; 1-deoxy-D-xylulose 5-phosphate from D-glyceraldehyde 3-phosphate and pyruvate: step 1/1. Catalyzes the acyloin condensation reaction between C atoms 2 and 3 of pyruvate and glyceraldehyde 3-phosphate to yield 1-deoxy-D-xylulose-5-phosphate (DXP). The protein is 1-deoxy-D-xylulose-5-phosphate synthase of Xylella fastidiosa (strain M12).